Consider the following 966-residue polypeptide: MASNSTKSFLADAGYGEQELDANSALMELDKGLRSGKLGEQCEAVVRFPRLFQKYPFPILINSAFLKLADVFRVGNNFLRLCVLKVTQQSEKHLEKILNVDEFVKRVFSVIHSNDPVARAITLRMLGSLASIIPERKNAHHSIRQSLDSHDNVEVEAAVFAAANFSAQSKDFAVGICNKISEMIQGLATPVDLKLKLIPILQHMHHDALLASSARQLLQQLVTSYPSTKMVIVSLHTFTLLAASSLVDTPKQIQLLLQYLKNDPRKAVKRLAVQDLKLLASKTPHTWSKENIQALCECALHTPYDSLKLGMLSVLSTLSGTIAIKHYFSVVPGNVGSSPRSSDLVKLAQECCYHSNRGIAAHGVRVLTNITVSCQEKDLLSLEQDAVFGLESLLVLCSQDDSPGAQSTVKSALSCMVKLAKGRPHLSRSVVDTLLTQLHSSQDAARILMCHCLAAIAMQLPVLGDGMLGDLVELYKVIGRSATDKQQELLVSLATVIFVASQKALSAEVKAVIKQQLESVSSGWTVYRIARQASRMGNHDMARELYQSLLTQVASEHFYFWLNSLKEFSHAEQCLTGLQEDSFSSALSCIAESLKFYHKGIASLTAASTPLNPLSFQCEFVKLRIDLLQAFSQLICTCNSLKTSPPPAIATTIAMTLGNDLQRCGRISNQMKQSMEEFRSLASRYRDLYQASFDADSATLRNVELQQQSCLLIAHAIEALVLDPESASFQEYGSTGAAHADSEYERRMMSVYSRVLEEVESLNRKYAPVSYMHTACLCNAIIALLKVPLSFQRYFFQKLQSTSIKLALSPSPRSPAEPIAVQNNQQLALKVEGVVQHGSKPGLFRRVQSVCLNVSSTLQSKSGQDYKIPIDSMTNEMEQRVEPHNDYFSTQFLLNFAVLGTHSITVESSVRDANGIVWKTGPRTTMFVKSLEDPYSQQIRLQQQAQQPLQPQPLPQPQPRSAYTRF.

A phosphoserine mark is found at Ser-338 and Ser-809. Residues 941-966 are disordered; sequence LQQQAQQPLQPQPLPQPQPRSAYTRF.

This sequence belongs to the Integrator subunit 7 family. Component of the Integrator complex, composed of core subunits INTS1, INTS2, INTS3, INTS4, INTS5, INTS6, INTS7, INTS8, INTS9/RC74, INTS10, INTS11/CPSF3L, INTS12, INTS13, INTS14 and INTS15. The core complex associates with protein phosphatase 2A subunits PPP2CA and PPP2R1A, to form the Integrator-PP2A (INTAC) complex. Interacts with NABP2.

The protein resides in the nucleus. It is found in the chromosome. Its subcellular location is the cytoplasm. Functionally, component of the integrator complex, a multiprotein complex that terminates RNA polymerase II (Pol II) transcription in the promoter-proximal region of genes. The integrator complex provides a quality checkpoint during transcription elongation by driving premature transcription termination of transcripts that are unfavorably configured for transcriptional elongation: the complex terminates transcription by (1) catalyzing dephosphorylation of the C-terminal domain (CTD) of Pol II subunit POLR2A/RPB1 and SUPT5H/SPT5, (2) degrading the exiting nascent RNA transcript via endonuclease activity and (3) promoting the release of Pol II from bound DNA. The integrator complex is also involved in terminating the synthesis of non-coding Pol II transcripts, such as enhancer RNAs (eRNAs), small nuclear RNAs (snRNAs), telomerase RNAs and long non-coding RNAs (lncRNAs). May be not involved in the recruitment of cytoplasmic dynein to the nuclear envelope by different components of the INT complex. Plays a role in DNA damage response (DDR) signaling during the S phase. The sequence is that of Integrator complex subunit 7 (Ints7) from Mus musculus (Mouse).